We begin with the raw amino-acid sequence, 101 residues long: Small ribosomal subunit protein uS14 (101 aa).

It belongs to the universal ribosomal protein uS14 family. Part of the 30S ribosomal subunit. Contacts proteins S3 and S10.

Its function is as follows. Binds 16S rRNA, required for the assembly of 30S particles and may also be responsible for determining the conformation of the 16S rRNA at the A site. The protein is Small ribosomal subunit protein uS14 of Shewanella putrefaciens (strain CN-32 / ATCC BAA-453).